The chain runs to 237 residues: Intracellular ribonuclease LX (237 aa).

Residues 1–24 (MMKSQKKLLIKIIVVQCLLVLCVT) constitute a propeptide that is removed on maturation. Glutamine 36 serves as a coordination point for RNA. Residues cysteine 42 and cysteine 48 are joined by a disulfide bond. RNA contacts are provided by residues histidine 63, phenylalanine 113, 116–117 (HE), and 120–121 (KH). Histidine 63 functions as the Proton donor in the catalytic mechanism. 3 disulfides stabilise this stretch: cysteine 78/cysteine 124, cysteine 183/cysteine 219, and cysteine 199/cysteine 210. Glutamate 117 is an active-site residue. Histidine 121 acts as the Proton acceptor in catalysis.

Belongs to the RNase T2 family.

It localises to the cytoplasm. It catalyses the reaction a ribonucleotidyl-ribonucleotide-RNA + H2O = a 3'-end 3'-phospho-ribonucleotide-RNA + a 5'-end dephospho-ribonucleoside-RNA + H(+). This Solanum lycopersicum (Tomato) protein is Intracellular ribonuclease LX (RNALX).